The chain runs to 286 residues: Aspartate/glutamate leucyltransferase (286 aa).

The protein belongs to the R-transferase family. Bpt subfamily.

It is found in the cytoplasm. The catalysed reaction is N-terminal L-glutamyl-[protein] + L-leucyl-tRNA(Leu) = N-terminal L-leucyl-L-glutamyl-[protein] + tRNA(Leu) + H(+). It catalyses the reaction N-terminal L-aspartyl-[protein] + L-leucyl-tRNA(Leu) = N-terminal L-leucyl-L-aspartyl-[protein] + tRNA(Leu) + H(+). In terms of biological role, functions in the N-end rule pathway of protein degradation where it conjugates Leu from its aminoacyl-tRNA to the N-termini of proteins containing an N-terminal aspartate or glutamate. This chain is Aspartate/glutamate leucyltransferase, found in Jannaschia sp. (strain CCS1).